An 852-amino-acid polypeptide reads, in one-letter code: Exported protein YdbA (852 aa).

Positions 1–21 (MQRKTLLSACIALALSGQGWA) are cleaved as a signal peptide. Disordered regions lie at residues 30–50 (TTGE…KLSP), 91–145 (DDDH…FNND), 307–354 (TITN…QDGD), 407–449 (TNGG…KVIQ), and 506–531 (NGGT…VDGK). The segment covering 307 to 319 (TITNGGTGTQING) has biased composition (low complexity). Polar residues predominate over residues 339 to 348 (GTEINGNNGK). Residues 506–516 (NGGTGTQINGN) are compositionally biased toward low complexity. Over residues 517 to 526 (DATANNSGKT) the composition is skewed to polar residues.

Its subcellular location is the secreted. Its function is as follows. The full-length protein (which is about 2000 amino acids long) is part of the autotransporter family. This is Exported protein YdbA (ydbA) from Escherichia coli (strain K12).